Consider the following 1028-residue polypeptide: Contactin-3 (1028 aa).

A signal peptide spans 1–19 (MMFPWKQLILLSFIGCLGG). 6 consecutive Ig-like C2-type domains span residues 26–117 (PVFI…AKLQ), 122–208 (ENFK…ARVL), 227–313 (PKIE…GRLT), 318–402 (PHWV…AELK), 408–497 (PDFS…LVVT), and 499–593 (PTRI…ADLI). Cystine bridges form between cysteine 50-cysteine 100, cysteine 144-cysteine 196, cysteine 249-cysteine 297, cysteine 339-cysteine 386, and cysteine 431-cysteine 479. N-linked (GlcNAc...) asparagine glycosylation is found at asparagine 65 and asparagine 193. N-linked (GlcNAc...) asparagine glycans are attached at residues asparagine 375, asparagine 468, and asparagine 489. A disulfide bridge connects residues cysteine 521 and cysteine 577. Fibronectin type-III domains are found at residues 600 to 698 (PPEN…TEEA), 703 to 800 (PPSE…SAEE), 805 to 901 (APSQ…TKKT), and 902 to 998 (PPSQ…TSMD). The disordered stretch occupies residues 684-713 (GEPSLPSEKVRTEEAVPEVPPSEVNGGGGS). N-linked (GlcNAc...) asparagine glycans are attached at residues asparagine 765, asparagine 860, asparagine 895, asparagine 913, asparagine 931, and asparagine 956. Residue serine 1002 is the site of GPI-anchor amidated serine attachment. Residues 1003 to 1028 (TSAISNVHPMSSYMPIVLFLIVYVLW) constitute a propeptide, removed in mature form.

It belongs to the immunoglobulin superfamily. Contactin family. In terms of assembly, interacts with PTPRG. In brain, it is expressed in frontal lobe, occipital lobe, cerebellum and amygdala.

It is found in the cell membrane. Its function is as follows. Contactins mediate cell surface interactions during nervous system development. Has some neurite outgrowth-promoting activity. This is Contactin-3 (CNTN3) from Homo sapiens (Human).